The primary structure comprises 142 residues: Hemoglobin subunit alpha-4 (142 aa).

The 141-residue stretch at 2–142 (TLTDSDKAAI…VATVLTSKYR (141 aa)) folds into the Globin domain. His59 is an O2 binding site. His88 provides a ligand contact to heme b.

This sequence belongs to the globin family. In terms of assembly, heterotetramer of two alpha chains and two beta chains. In terms of tissue distribution, red blood cells.

This is a larval (tadpole) alpha-globin. The polypeptide is Hemoglobin subunit alpha-4 (hba4) (Xenopus laevis (African clawed frog)).